A 658-amino-acid polypeptide reads, in one-letter code: Putative arrestin-related trafficking adapter C2D10.04 (658 aa).

Disordered stretches follow at residues 21 to 107 (LHHQ…LTWS) and 638 to 658 (REEA…EIPR). Positions 39–81 (NRSSNSGLNRRNSVFGLPSSGLSSRLSKPSLSSINNSNNSSSN) are enriched in low complexity. Positions 96–107 (RNMSNKPPLTWS) are enriched in polar residues. The residue at position 653 (Ser653) is a Phosphoserine.

The protein belongs to the ALY1 family.

It is found in the cytoplasm. May regulate endocytosis in response to extracellular stimuli. This Schizosaccharomyces pombe (strain 972 / ATCC 24843) (Fission yeast) protein is Putative arrestin-related trafficking adapter C2D10.04.